Consider the following 495-residue polypeptide: MSRITTDQLRHAVLDRGSFVSWDSEPLAVPVADSYARELAAARAATGADESVQTGEGRVFGRRVAVVACEFDFLGGSIGVAAAERITAAVERATAERLPLLASPSSGGTRMQEGTVAFLQMVKIAAAIQLHNQARLPYLVYLRHPTTGGVFASWGSLGHLTVAEPGALIGFLGPRVYELLYGDPFPSGVQTAENLRRHGIIDGVVALDRLRPMLDRALTVLIDAPEPLPAPQTPAPVPDVPTWDSVVASRRPDRPGVRQLLRHGATDRVLLSGTDQGEAATTLLALARFGGQPTVVLGQQRAVGGGGSTVGPAALREARRGMALAAELCLPLVLVIDAAGPALSAAAEQGGLAGQIAHCLAELVTLDTPTVSILLGQGSGGPALAMLPADRVLAALHGWLAPLPPEGASAIVFRDTAHAAELAAAQGIRSADLLKSGIVDTIVPEYPDAADEPIEFALRLSNAIAAEVHALRKIPAPERLATRLQRYRRIGLPRD.

In terms of domain architecture, CoA carboxyltransferase N-terminal spans 1 to 236 (MSRITTDQLR…PLPAPQTPAP (236 aa)). Residues 242–470 (TWDSVVASRR…SNAIAAEVHA (229 aa)) form the CoA carboxyltransferase C-terminal domain.

Belongs to the AccD/PCCB family. As to quaternary structure, the biotin-dependent acyl-CoA carboxylase complex is composed of an AccA protein, which contains the biotin carboxylase (BC) and biotin carboxyl carrier protein (BCCP) domains, and an AccD protein, which contains the carboxyl transferase (CT) domain.

Functionally, component of a biotin-dependent acyl-CoA carboxylase complex. This subunit transfers the CO2 from carboxybiotin to the CoA ester substrate. The sequence is that of Probable biotin-dependent acyl-coenzyme A carboxylase beta3 subunit (accD3) from Mycobacterium bovis (strain ATCC BAA-935 / AF2122/97).